A 974-amino-acid polypeptide reads, in one-letter code: Kinesin-like protein KIN-7A (974 aa).

The tract at residues 1–29 (MTIKTPGTPVSKMDRTPAVTPGGSSRSRE) is disordered. The 323-residue stretch at 31-353 (KIVVTVRLRP…LYFANRAKEV (323 aa)) folds into the Kinesin motor domain. 117-124 (GQTSSGKT) serves as a coordination point for ATP. Coiled-coil stretches lie at residues 362-435 (VVSD…KGLN) and 565-603 (SANLKEEITRLHSQGSTIANLEEQLESVQKSIDKLVMSL). Disordered regions lie at residues 605–649 (SNIS…PCSP) and 663–713 (NKAP…SSVN). Basic residues predominate over residues 616 to 628 (TKNHHHQSKKKKL). Composition is skewed to polar residues over residues 638–649 (NRQNFLKSPCSP) and 666–682 (PQENNSSAARGATTPQG). Positions 683-693 (SEKETPQKGEE) are enriched in basic and acidic residues.

It belongs to the TRAFAC class myosin-kinesin ATPase superfamily. Kinesin family. KIN-7 subfamily. Phosphorylated at Thr-145, Thr-687 and Thr-703 by CDKAs and CDKBs. Phosphorylated NACK1 fails to mediate cytokinesis. As to expression, expressed in roots, flowers, pollen mother cells and embryos.

It is found in the cytoplasm. It localises to the cytoskeleton. Its subcellular location is the phragmoplast. Its function is as follows. Probable plus end-directed motor protein that functions in the NACK-PQR (ANP1-MKK6-MPK4) MAP kinase signaling pathway, which is essential for somatic cell cytokinesis, especially for the cell-plate formation and its expansion. Regulates the activity and the localization of ANP1, probably by association through the non-catalytic region of the kinase. Functionally redundant with NACK2 and essential to promote the progression of cytokinesis and for cellularization (formation of the cell plate) during microgametogenesis and megagametogenesis. This is Kinesin-like protein KIN-7A from Arabidopsis thaliana (Mouse-ear cress).